A 561-amino-acid polypeptide reads, in one-letter code: Potassium-transporting ATPase potassium-binding subunit (561 aa).

12 consecutive transmembrane segments (helical) span residues 5-25, 60-80, 86-106, 130-150, 177-197, 247-267, 281-301, 324-344, 376-396, 415-435, 491-511, and 533-553; these read LAAG…YVPV, YGYA…LYFL, VLPL…NTAI, VGLA…AIAL, ILLP…VIQS, PTPL…VCLT, LTLL…TLAA, FGIP…TGAV, GLYG…LLVG, ALSI…TVIL, ICML…AGAL, and GLLT…ALAL.

The protein belongs to the KdpA family. As to quaternary structure, the system is composed of three essential subunits: KdpA, KdpB and KdpC.

It is found in the cell membrane. Functionally, part of the high-affinity ATP-driven potassium transport (or Kdp) system, which catalyzes the hydrolysis of ATP coupled with the electrogenic transport of potassium into the cytoplasm. This subunit binds the extracellular potassium ions and delivers the ions to the membrane domain of KdpB through an intramembrane tunnel. This chain is Potassium-transporting ATPase potassium-binding subunit, found in Rhodococcus erythropolis (strain PR4 / NBRC 100887).